The sequence spans 527 residues: Catalase (527 aa).

Basic and acidic residues predominate over residues 1–22; it reads MSDSRDPASDQMKQWKEQRASQ. The disordered stretch occupies residues 1-34; the sequence is MSDSRDPASDQMKQWKEQRASQRPDVLTTGGGNP. The residue at position 2 (Ser2) is an N-acetylserine. At Ser9 the chain carries Phosphoserine. Lys13 is subject to N6-succinyllysine. Ser21 bears the Phosphoserine mark. Residues His75 and Asn148 contribute to the active site. Positions 194, 201, 203, and 213 each coordinate NADP(+). Lys221 carries the N6-succinyllysine modification. Residue Lys233 is modified to N6-acetyllysine. Lys237, Trp303, His305, and Lys306 together coordinate NADP(+). N6-acetyllysine; alternate is present on Lys306. Residue Lys306 is modified to N6-succinyllysine; alternate. Tyr358 lines the heme pocket. A phosphoserine mark is found at Ser417 and Ser422. Residue Lys430 is modified to N6-acetyllysine; alternate. Position 430 is an N6-succinyllysine; alternate (Lys430). Phosphoserine is present on Ser434. 2 positions are modified to N6-acetyllysine; alternate: Lys449 and Lys480. Residues Lys449 and Lys480 each carry the N6-succinyllysine; alternate modification. An N6-acetyllysine modification is found at Lys499. A Phosphothreonine modification is found at Thr511. Ser517 carries the post-translational modification Phosphoserine. Lys522 carries the N6-succinyllysine modification. The Microbody targeting signal; atypical signature appears at 524 to 527; it reads KANL.

Belongs to the catalase family. In terms of assembly, homotetramer. Interacts (via microbody targeting signal) with PEX5, monomeric form interacts with PEX5, leading to its translocation into peroxisomes. It depends on heme as a cofactor. Requires NADP(+) as cofactor.

Its subcellular location is the peroxisome matrix. It carries out the reaction 2 H2O2 = O2 + 2 H2O. Its function is as follows. Catalyzes the degradation of hydrogen peroxide (H(2)O(2)) generated by peroxisomal oxidases to water and oxygen, thereby protecting cells from the toxic effects of hydrogen peroxide. Promotes growth of cells including T-cells, B-cells, myeloid leukemia cells, melanoma cells, mastocytoma cells and normal and transformed fibroblast cells. The chain is Catalase (Cat) from Mus musculus (Mouse).